The following is a 259-amino-acid chain: Global transcriptional regulator CodY (259 aa).

The GAF domain stretch occupies residues 1–155 (MDLLSRARKI…GATVVGMEIL (155 aa)). The H-T-H motif DNA-binding region spans 203 to 222 (ASKIADRVGITRSVIVNALR). A Phosphoserine modification is found at Ser215.

It belongs to the CodY family.

The protein resides in the cytoplasm. DNA-binding global transcriptional regulator which is involved in the adaptive response to starvation and acts by directly or indirectly controlling the expression of numerous genes in response to nutrient availability. During rapid exponential growth, CodY is highly active and represses genes whose products allow adaptation to nutrient depletion. In Oceanobacillus iheyensis (strain DSM 14371 / CIP 107618 / JCM 11309 / KCTC 3954 / HTE831), this protein is Global transcriptional regulator CodY.